The sequence spans 66 residues: Large ribosomal subunit protein uL29 (66 aa).

The protein belongs to the universal ribosomal protein uL29 family. As to quaternary structure, part of the 50S ribosomal subunit.

This is Large ribosomal subunit protein uL29 (rpmC) from Bacillus subtilis (strain 168).